Consider the following 162-residue polypeptide: Small ribosomal subunit protein uS5 (162 aa).

Residues 11–74 (LTDRVVHISR…EQAKKNLIKV (64 aa)) enclose the S5 DRBM domain.

This sequence belongs to the universal ribosomal protein uS5 family. In terms of assembly, part of the 30S ribosomal subunit. Contacts proteins S4 and S8.

Its function is as follows. With S4 and S12 plays an important role in translational accuracy. Functionally, located at the back of the 30S subunit body where it stabilizes the conformation of the head with respect to the body. The chain is Small ribosomal subunit protein uS5 from Pelobacter propionicus (strain DSM 2379 / NBRC 103807 / OttBd1).